A 300-amino-acid polypeptide reads, in one-letter code: Ornithine carbamoyltransferase (300 aa).

Residues Ser-50 to Thr-53, Gln-77, Arg-101, and His-128 to Gln-131 contribute to the carbamoyl phosphate site. L-ornithine is bound by residues Asn-159, Asp-219, and Ser-223–Met-224. Carbamoyl phosphate contacts are provided by residues Cys-257–Leu-258 and Arg-285.

Belongs to the aspartate/ornithine carbamoyltransferase superfamily. OTCase family.

The protein localises to the cytoplasm. The catalysed reaction is carbamoyl phosphate + L-ornithine = L-citrulline + phosphate + H(+). It functions in the pathway amino-acid degradation; L-arginine degradation via ADI pathway; carbamoyl phosphate from L-arginine: step 2/2. Reversibly catalyzes the transfer of the carbamoyl group from carbamoyl phosphate (CP) to the N(epsilon) atom of ornithine (ORN) to produce L-citrulline. The protein is Ornithine carbamoyltransferase of Haloquadratum walsbyi (strain DSM 16790 / HBSQ001).